The sequence spans 234 residues: LexA repressor (234 aa).

The segment at residues 26-46 is a DNA-binding region (H-T-H motif); the sequence is FDEMKEALDLASKSGIHRLIT. The interval 73 to 107 is disordered; it reads ATAAAPPKGRGAFRPQVFEGGGAPPPAASPAAAAN. Residues serine 155 and lysine 192 each act as for autocatalytic cleavage activity in the active site.

This sequence belongs to the peptidase S24 family. In terms of assembly, homodimer.

It carries out the reaction Hydrolysis of Ala-|-Gly bond in repressor LexA.. Represses a number of genes involved in the response to DNA damage (SOS response), including recA and lexA. In the presence of single-stranded DNA, RecA interacts with LexA causing an autocatalytic cleavage which disrupts the DNA-binding part of LexA, leading to derepression of the SOS regulon and eventually DNA repair. The sequence is that of LexA repressor from Caulobacter vibrioides (strain ATCC 19089 / CIP 103742 / CB 15) (Caulobacter crescentus).